The following is a 277-amino-acid chain: Inositol monophosphatase 1 (277 aa).

Mg(2+)-binding residues include Glu-70, Asp-90, Ile-92, and Asp-93. Substrate contacts are provided by residues Glu-70, 90–95 (DPIDGT), 194–196 (GTA), Glu-213, and Asp-220. Asp-220 provides a ligand contact to Mg(2+).

It belongs to the inositol monophosphatase superfamily. Homodimer. Requires Mg(2+) as cofactor. As to expression, mostly expressed in brain, small intestine, testis, kidney, and spleen (at protein level).

Its subcellular location is the cytoplasm. It catalyses the reaction a myo-inositol phosphate + H2O = myo-inositol + phosphate. The catalysed reaction is 1D-myo-inositol 1-phosphate + H2O = myo-inositol + phosphate. It carries out the reaction 1D-myo-inositol 2-phosphate + H2O = myo-inositol + phosphate. The enzyme catalyses 1D-myo-inositol 3-phosphate + H2O = myo-inositol + phosphate. It catalyses the reaction 1D-myo-inositol 4-phosphate + H2O = myo-inositol + phosphate. The catalysed reaction is 1D-myo-inositol 5-phosphate + H2O = myo-inositol + phosphate. It carries out the reaction 1D-myo-inositol 6-phosphate + H2O = myo-inositol + phosphate. The enzyme catalyses scyllo-inositol 1-phosphate + H2O = scyllo-inositol + phosphate. It catalyses the reaction alpha-D-galactose 1-phosphate + H2O = D-galactose + phosphate. The catalysed reaction is alpha-D-glucose 1-phosphate + H2O = D-glucose + phosphate. It carries out the reaction D-glucose 6-phosphate + H2O = D-glucose + phosphate. The enzyme catalyses beta-D-fructose 1-phosphate + H2O = D-fructose + phosphate. It catalyses the reaction glycerol 2-phosphate + H2O = glycerol + phosphate. The catalysed reaction is adenosine 2'-phosphate + H2O = adenosine + phosphate. Its pathway is polyol metabolism; myo-inositol biosynthesis; myo-inositol from D-glucose 6-phosphate: step 2/2. Inhibited by Li(+), Ca(2+) and Mn(2+), but also by Mg(2+) at concentrations above 3 mM. Phosphatase involved in the dephosphorylation of myo-inositol monophosphate to generate myo-inositol. Is also able to dephosphorylate scyllo-inositol-phosphate, myo-inositol 1,4-diphosphate, scyllo-inositol-1,3-diphosphate and scyllo-inositol-1,4-diphosphate. Also dephosphorylates in vitro other sugar-phosphates including D-galactose-1-phosphate, glucose-1-phosphate, glucose-6-phosphate, fructose-1-phosphate, beta-glycerophosphate and 2'-AMP. Responsible for the provision of inositol required for synthesis of phosphatidylinositol and polyphosphoinositides, and involved in maintaining normal brain function. Has been implicated as the pharmacological target for lithium Li(+) action in brain. This Mus musculus (Mouse) protein is Inositol monophosphatase 1 (Impa1).